The sequence spans 481 residues: Abietadienol/abietadienal oxidase (481 aa).

Residues 2–22 traverse the membrane as a helical segment; the sequence is ADQISLLLVVFTAAVALLHLI. Position 430 (cysteine 430) interacts with heme.

Belongs to the cytochrome P450 family. It depends on heme as a cofactor. Expressed in young tissues such as flushing buds and green bark tissues. Lower levels in mature needles and bark.

It is found in the membrane. It catalyses the reaction abieta-7,13-dien-18-ol + 2 reduced [NADPH--hemoprotein reductase] + 2 O2 = abieta-7,13-dien-18-oate + 2 oxidized [NADPH--hemoprotein reductase] + 3 H2O + 3 H(+). Its function is as follows. Multifunctional and multisubstrate cytochrome P450 that oxidizes the respective carbon 18 of abietadienol, abietadienal, levopimaradienol, isopimara-7,15-dienol, isopimara-7,15-dienal, dehydroabietadienol, and dehydroabietadienal. In Pinus taeda (Loblolly pine), this protein is Abietadienol/abietadienal oxidase (CYP720B1).